A 1205-amino-acid polypeptide reads, in one-letter code: Nitric oxide synthase 3 (1205 aa).

2 disordered regions span residues 1–20 and 26–73; these read MGNLKSVGQEPGPPCGLGLG and CGKQ…FPRV. A compositionally biased stretch (pro residues) spans 33–47; that stretch reads SPAPEPSWAPAPATP. Zn(2+) is bound by residues Cys96 and Cys101. The tract at residues 100–489 is interaction with NOSIP; the sequence is RCLGSLVLPR…PDPWKGSAAK (390 aa). Position 104 (Ser104) interacts with (6R)-L-erythro-5,6,7,8-tetrahydrobiopterin. At Ser116 the chain carries Phosphoserine. Residue Cys186 coordinates heme b. Gln250, Trp359, Tyr360, and Glu364 together coordinate L-arginine. Arg368 serves as a coordination point for (6R)-L-erythro-5,6,7,8-tetrahydrobiopterin. Asn369 serves as a coordination point for L-arginine. 3 residues coordinate (6R)-L-erythro-5,6,7,8-tetrahydrobiopterin: Ala449, Trp450, and Phe463. Tyr478 lines the heme b pocket. Thr498 is subject to Phosphothreonine. 6 residues coordinate FMN: Ser529, Glu530, Thr531, Arg533, Ser575, and Thr576. Phosphoserine is present on residues Ser618, Ser636, and Ser641. Ser657, Cys664, Glu690, and Gln694 together coordinate FMN. An NADP(+)-binding site is contributed by Arg781. The segment at 796-850 is disordered; that stretch reads LQYQPGDHISPHPPPRSSHRPGQGGPRVAPFSERPLMPRTPPPGGPPPSWVRDPR. His803 contributes to the FAD binding site. Positions 833–844 are enriched in pro residues; sequence PRTPPPGGPPPS. Positions 939, 941, 942, 957, and 959 each coordinate FAD. NADP(+) contacts are provided by Thr1018, Arg1051, Ser1080, Arg1081, Lys1087, Tyr1089, and Gln1091. A Phosphothreonine modification is found at Thr1177. A phosphoserine mark is found at Ser1179 and Ser1181.

It belongs to the NOS family. Homodimer. Interacts with NOSIP and NOSTRIN. Interacts with HSP90AB1. Forms a complex with ASL, ASS1 and SLC7A1; the complex regulates cell-autonomous L-arginine synthesis and citrulline recycling while channeling extracellular L-arginine to nitric oxide synthesis pathway. Heme b serves as cofactor. The cofactor is FAD. Requires FMN as cofactor. It depends on (6R)-L-erythro-5,6,7,8-tetrahydrobiopterin as a cofactor.

Its subcellular location is the membrane. It is found in the caveola. The protein localises to the cytoplasm. It localises to the cytoskeleton. The protein resides in the golgi apparatus. Its subcellular location is the cell membrane. The catalysed reaction is 2 L-arginine + 3 NADPH + 4 O2 + H(+) = 2 L-citrulline + 2 nitric oxide + 3 NADP(+) + 4 H2O. Stimulated by calcium/calmodulin. Inhibited by NOSIP and NOSTRIN. In terms of biological role, produces nitric oxide (NO) which is implicated in vascular smooth muscle relaxation through a cGMP-mediated signal transduction pathway. NO mediates vascular endothelial growth factor (VEGF)-induced angiogenesis in coronary vessels and promotes blood clotting through the activation of platelets. In Ovis aries (Sheep), this protein is Nitric oxide synthase 3 (NOS3).